We begin with the raw amino-acid sequence, 269 residues long: Subtilisin Savinase (269 aa).

Gln2 contacts Ca(2+). Positions 5–268 (PWGISRVQAP…SGLVNAEAAT (264 aa)) constitute a Peptidase S8 domain. Asp32 serves as the catalytic Charge relay system. Asp40 is a Ca(2+) binding site. The active-site Charge relay system is His62. Leu73, Asn75, Ile77, Val79, Ala163, Tyr165, and Ala168 together coordinate Ca(2+). Residue Ser215 is the Charge relay system of the active site.

It belongs to the peptidase S8 family. Ca(2+) serves as cofactor.

The protein localises to the secreted. The enzyme catalyses Hydrolysis of proteins with broad specificity for peptide bonds, and a preference for a large uncharged residue in P1. Hydrolyzes peptide amides.. In terms of biological role, subtilisin is an extracellular alkaline serine protease, it catalyzes the hydrolysis of proteins and peptide amides. The polypeptide is Subtilisin Savinase (Lederbergia lenta (Bacillus lentus)).